The following is a 264-amino-acid chain: NAD-capped RNA hydrolase NudC (264 aa).

Zn(2+) is bound by residues cysteine 99 and cysteine 102. Residue glutamate 112 participates in substrate binding. Cysteine 117 and cysteine 120 together coordinate Zn(2+). Tyrosine 125 contacts substrate. Residues 126–253 (PVICPSIIVA…TIARKLIHAT (128 aa)) form the Nudix hydrolase domain. A divalent metal cation-binding residues include alanine 162, glutamate 178, and glutamate 182. Positions 163 to 184 (GFVEVGETFEQAVQREVFEETG) match the Nudix box motif. 196–203 (QPWAFPNS) is a substrate binding site. Glutamate 223 provides a ligand contact to a divalent metal cation. Alanine 246 contacts substrate.

It belongs to the Nudix hydrolase family. NudC subfamily. Homodimer. Requires Mg(2+) as cofactor. Mn(2+) serves as cofactor. The cofactor is Zn(2+).

The catalysed reaction is a 5'-end NAD(+)-phospho-ribonucleoside in mRNA + H2O = a 5'-end phospho-adenosine-phospho-ribonucleoside in mRNA + beta-nicotinamide D-ribonucleotide + 2 H(+). The enzyme catalyses NAD(+) + H2O = beta-nicotinamide D-ribonucleotide + AMP + 2 H(+). It catalyses the reaction NADH + H2O = reduced beta-nicotinamide D-ribonucleotide + AMP + 2 H(+). Functionally, mRNA decapping enzyme that specifically removes the nicotinamide adenine dinucleotide (NAD) cap from a subset of mRNAs by hydrolyzing the diphosphate linkage to produce nicotinamide mononucleotide (NMN) and 5' monophosphate mRNA. The NAD-cap is present at the 5'-end of some mRNAs and stabilizes RNA against 5'-processing. Has preference for mRNAs with a 5'-end purine. Catalyzes the hydrolysis of a broad range of dinucleotide pyrophosphates. The polypeptide is NAD-capped RNA hydrolase NudC (Haemophilus influenzae (strain PittGG)).